Here is a 370-residue protein sequence, read N- to C-terminus: uncharacterized protein (370 aa).

The a divalent metal cation site is built by aspartate 152, histidine 154, aspartate 184, asparagine 215, histidine 306, and histidine 308.

The protein belongs to the metallophosphoesterase superfamily. The cofactor is a divalent metal cation.

This is an uncharacterized protein from Helicobacter pylori (strain ATCC 700392 / 26695) (Campylobacter pylori).